We begin with the raw amino-acid sequence, 312 residues long: Malate dehydrogenase (312 aa).

NAD(+) contacts are provided by residues 7–13 (GAAGGIG) and D34. Positions 81 and 87 each coordinate substrate. Residues N94 and 117–119 (ITN) each bind NAD(+). Substrate-binding residues include N119 and R153. H177 functions as the Proton acceptor in the catalytic mechanism. M227 contacts NAD(+).

The protein belongs to the LDH/MDH superfamily. MDH type 1 family. In terms of assembly, homodimer.

The catalysed reaction is (S)-malate + NAD(+) = oxaloacetate + NADH + H(+). Catalyzes the reversible oxidation of malate to oxaloacetate. In Shigella dysenteriae serotype 1 (strain Sd197), this protein is Malate dehydrogenase.